Here is a 341-residue protein sequence, read N- to C-terminus: L-threonine 3-dehydrogenase (341 aa).

C38 provides a ligand contact to Zn(2+). Catalysis depends on charge relay system residues T40 and H43. Zn(2+) is bound by residues H63, E64, C93, C96, C99, and C107. Residues I175, D195, R200, 262 to 264 (LGI), and 286 to 287 (IY) contribute to the NAD(+) site.

Belongs to the zinc-containing alcohol dehydrogenase family. As to quaternary structure, homotetramer. The cofactor is Zn(2+).

The protein localises to the cytoplasm. It carries out the reaction L-threonine + NAD(+) = (2S)-2-amino-3-oxobutanoate + NADH + H(+). It participates in amino-acid degradation; L-threonine degradation via oxydo-reductase pathway; glycine from L-threonine: step 1/2. Functionally, catalyzes the NAD(+)-dependent oxidation of L-threonine to 2-amino-3-ketobutyrate. The polypeptide is L-threonine 3-dehydrogenase (Escherichia coli O157:H7).